A 341-amino-acid polypeptide reads, in one-letter code: Ras association domain-containing protein 6 (341 aa).

Residue Ser-155 is modified to Phosphoserine. Residues 190–278 (YDHETSIFTP…ARIFLMDKDA (89 aa)) enclose the Ras-associating domain. An SARAH domain is found at 285–332 (VAPYINFHFSFLKSILQRLDEEEKMEIERIMAKFNTERAFILKCLQSK).

As to quaternary structure, interacts with MOAP1. Interaction with activated KRAS is still a matter of debate.

In terms of biological role, involved in the induction of apoptosis. May act as a Ras effector protein. May suppress the serum-induced basal levels of NF-kappa-B. The sequence is that of Ras association domain-containing protein 6 (Rassf6) from Rattus norvegicus (Rat).